The primary structure comprises 118 residues: Large ribosomal subunit protein bL19 (118 aa).

It belongs to the bacterial ribosomal protein bL19 family.

This protein is located at the 30S-50S ribosomal subunit interface and may play a role in the structure and function of the aminoacyl-tRNA binding site. The polypeptide is Large ribosomal subunit protein bL19 (Frankia alni (strain DSM 45986 / CECT 9034 / ACN14a)).